We begin with the raw amino-acid sequence, 100 residues long: Small ribosomal subunit protein uS14c (100 aa).

Belongs to the universal ribosomal protein uS14 family. As to quaternary structure, part of the 30S ribosomal subunit.

It localises to the plastid. The protein resides in the chloroplast. In terms of biological role, binds 16S rRNA, required for the assembly of 30S particles. The chain is Small ribosomal subunit protein uS14c from Fagopyrum esculentum subsp. ancestrale (Wild buckwheat).